The chain runs to 300 residues: GTPase Era (300 aa).

One can recognise an Era-type G domain in the interval 7–175 (YCGFIAIVGR…EKFVRESLKE (169 aa)). A G1 region spans residues 15 to 22 (GRPNVGKS). Position 15-22 (15-22 (GRPNVGKS)) interacts with GTP. The interval 41 to 45 (QTTRH) is G2. The G3 stretch occupies residues 62-65 (DTPG). GTP contacts are provided by residues 62 to 66 (DTPGL) and 124 to 127 (NKVD). The G4 stretch occupies residues 124–127 (NKVD). The segment at 154–156 (ISA) is G5. The region spanning 206 to 283 (MGEELPYSVT…HLELWVKVKA (78 aa)) is the KH type-2 domain.

The protein belongs to the TRAFAC class TrmE-Era-EngA-EngB-Septin-like GTPase superfamily. Era GTPase family. Monomer.

It localises to the cytoplasm. Its subcellular location is the cell inner membrane. Its function is as follows. An essential GTPase that binds both GDP and GTP, with rapid nucleotide exchange. Plays a role in 16S rRNA processing and 30S ribosomal subunit biogenesis and possibly also in cell cycle regulation and energy metabolism. The sequence is that of GTPase Era from Glaesserella parasuis serovar 5 (strain SH0165) (Haemophilus parasuis).